The primary structure comprises 424 residues: Trigger factor (424 aa).

The PPIase FKBP-type domain maps to 163 to 248 (GDTVVLDFEG…IHEIKAKELP (86 aa)).

Belongs to the FKBP-type PPIase family. Tig subfamily.

It is found in the cytoplasm. It catalyses the reaction [protein]-peptidylproline (omega=180) = [protein]-peptidylproline (omega=0). In terms of biological role, involved in protein export. Acts as a chaperone by maintaining the newly synthesized protein in an open conformation. Functions as a peptidyl-prolyl cis-trans isomerase. This chain is Trigger factor, found in Bacillus licheniformis (strain ATCC 14580 / DSM 13 / JCM 2505 / CCUG 7422 / NBRC 12200 / NCIMB 9375 / NCTC 10341 / NRRL NRS-1264 / Gibson 46).